A 130-amino-acid chain; its full sequence is ATP synthase epsilon chain, chloroplastic (130 aa).

Belongs to the ATPase epsilon chain family. In terms of assembly, F-type ATPases have 2 components, CF(1) - the catalytic core - and CF(0) - the membrane proton channel. CF(1) has five subunits: alpha(3), beta(3), gamma(1), delta(1), epsilon(1). CF(0) has three main subunits: a, b and c.

Its subcellular location is the plastid. The protein resides in the chloroplast thylakoid membrane. Its function is as follows. Produces ATP from ADP in the presence of a proton gradient across the membrane. This Tupiella akineta (Green alga) protein is ATP synthase epsilon chain, chloroplastic.